The chain runs to 348 residues: MTRLTLALDAMGGDFGPCVTVPAALQALASNPALNLLLVGDPAAITPLLAKVDSDLLSRLEVVPAESVIASDARPSQAIRASRGTSMRIALELIKDGRAQACVSAGNTGALMGLAKLLIKPLEGIERPALVSVLPHQQHGKTVVLDLGANVDCDSTMLVQFAVMGSVMAEEVLELKNPRVALLNIGEEESKGLSTIREAAAQLKEAPSINYIGYLEGNDLLTGKTDVMVCDGFVGNVTLKTVEGVVRMFLSLLKSPASGPGQKQKRSWWLKWLGRLLQKRLSKRFGHLNPDQYNGACLLGLRGTVIKSHGAANQRAFAVAIEQAMQTVRRQLPDRIAARLEAVLPKSD.

It belongs to the PlsX family. As to quaternary structure, homodimer. Probably interacts with PlsY.

It is found in the cytoplasm. It catalyses the reaction a fatty acyl-[ACP] + phosphate = an acyl phosphate + holo-[ACP]. It participates in lipid metabolism; phospholipid metabolism. Catalyzes the reversible formation of acyl-phosphate (acyl-PO(4)) from acyl-[acyl-carrier-protein] (acyl-ACP). This enzyme utilizes acyl-ACP as fatty acyl donor, but not acyl-CoA. The chain is Phosphate acyltransferase from Pectobacterium carotovorum subsp. carotovorum (strain PC1).